Here is a 256-residue protein sequence, read N- to C-terminus: Imidazole glycerol phosphate synthase subunit HisF (256 aa).

Active-site residues include D12 and D131.

It belongs to the HisA/HisF family. As to quaternary structure, heterodimer of HisH and HisF.

The protein localises to the cytoplasm. It catalyses the reaction 5-[(5-phospho-1-deoxy-D-ribulos-1-ylimino)methylamino]-1-(5-phospho-beta-D-ribosyl)imidazole-4-carboxamide + L-glutamine = D-erythro-1-(imidazol-4-yl)glycerol 3-phosphate + 5-amino-1-(5-phospho-beta-D-ribosyl)imidazole-4-carboxamide + L-glutamate + H(+). The protein operates within amino-acid biosynthesis; L-histidine biosynthesis; L-histidine from 5-phospho-alpha-D-ribose 1-diphosphate: step 5/9. IGPS catalyzes the conversion of PRFAR and glutamine to IGP, AICAR and glutamate. The HisF subunit catalyzes the cyclization activity that produces IGP and AICAR from PRFAR using the ammonia provided by the HisH subunit. The sequence is that of Imidazole glycerol phosphate synthase subunit HisF from Pseudomonas fluorescens (strain SBW25).